Consider the following 127-residue polypeptide: Large ribosomal subunit protein bL17 (127 aa).

Belongs to the bacterial ribosomal protein bL17 family. In terms of assembly, part of the 50S ribosomal subunit. Contacts protein L32.

The sequence is that of Large ribosomal subunit protein bL17 from Photobacterium profundum (strain SS9).